The chain runs to 225 residues: NAD(P)H-quinone oxidoreductase subunit K, chloroplastic (225 aa).

Cys43, Cys44, Cys108, and Cys139 together coordinate [4Fe-4S] cluster.

The protein belongs to the complex I 20 kDa subunit family. As to quaternary structure, NDH is composed of at least 16 different subunits, 5 of which are encoded in the nucleus. The cofactor is [4Fe-4S] cluster.

The protein resides in the plastid. Its subcellular location is the chloroplast thylakoid membrane. It carries out the reaction a plastoquinone + NADH + (n+1) H(+)(in) = a plastoquinol + NAD(+) + n H(+)(out). The enzyme catalyses a plastoquinone + NADPH + (n+1) H(+)(in) = a plastoquinol + NADP(+) + n H(+)(out). NDH shuttles electrons from NAD(P)H:plastoquinone, via FMN and iron-sulfur (Fe-S) centers, to quinones in the photosynthetic chain and possibly in a chloroplast respiratory chain. The immediate electron acceptor for the enzyme in this species is believed to be plastoquinone. Couples the redox reaction to proton translocation, and thus conserves the redox energy in a proton gradient. This Platanus occidentalis (Sycamore) protein is NAD(P)H-quinone oxidoreductase subunit K, chloroplastic.